The following is a 160-amino-acid chain: SsrA-binding protein (160 aa).

It belongs to the SmpB family.

The protein resides in the cytoplasm. Required for rescue of stalled ribosomes mediated by trans-translation. Binds to transfer-messenger RNA (tmRNA), required for stable association of tmRNA with ribosomes. tmRNA and SmpB together mimic tRNA shape, replacing the anticodon stem-loop with SmpB. tmRNA is encoded by the ssrA gene; the 2 termini fold to resemble tRNA(Ala) and it encodes a 'tag peptide', a short internal open reading frame. During trans-translation Ala-aminoacylated tmRNA acts like a tRNA, entering the A-site of stalled ribosomes, displacing the stalled mRNA. The ribosome then switches to translate the ORF on the tmRNA; the nascent peptide is terminated with the 'tag peptide' encoded by the tmRNA and targeted for degradation. The ribosome is freed to recommence translation, which seems to be the essential function of trans-translation. This is SsrA-binding protein from Zymomonas mobilis subsp. mobilis (strain ATCC 31821 / ZM4 / CP4).